The primary structure comprises 273 residues: Formamidopyrimidine-DNA glycosylase (273 aa).

Catalysis depends on Pro2, which acts as the Schiff-base intermediate with DNA. The Proton donor role is filled by Glu3. Lys58 functions as the Proton donor; for beta-elimination activity in the catalytic mechanism. DNA contacts are provided by His92, Arg111, and Lys153. An FPG-type zinc finger spans residues 238-272 (KVYGREGQSCLSCSSTIIKIKHSGRSTFYCKTCQY). Catalysis depends on Arg262, which acts as the Proton donor; for delta-elimination activity.

It belongs to the FPG family. As to quaternary structure, monomer. Zn(2+) is required as a cofactor.

The catalysed reaction is Hydrolysis of DNA containing ring-opened 7-methylguanine residues, releasing 2,6-diamino-4-hydroxy-5-(N-methyl)formamidopyrimidine.. It catalyses the reaction 2'-deoxyribonucleotide-(2'-deoxyribose 5'-phosphate)-2'-deoxyribonucleotide-DNA = a 3'-end 2'-deoxyribonucleotide-(2,3-dehydro-2,3-deoxyribose 5'-phosphate)-DNA + a 5'-end 5'-phospho-2'-deoxyribonucleoside-DNA + H(+). Its function is as follows. Involved in base excision repair of DNA damaged by oxidation or by mutagenic agents. Acts as a DNA glycosylase that recognizes and removes damaged bases. Has a preference for oxidized purines, such as 7,8-dihydro-8-oxoguanine (8-oxoG). Has AP (apurinic/apyrimidinic) lyase activity and introduces nicks in the DNA strand. Cleaves the DNA backbone by beta-delta elimination to generate a single-strand break at the site of the removed base with both 3'- and 5'-phosphates. The protein is Formamidopyrimidine-DNA glycosylase of Rickettsia africae (strain ESF-5).